The primary structure comprises 2431 residues: Nucleoprotein TPR (2431 aa).

The segment at M1 to P48 is disordered. The segment at A77–E87 is sufficient for interaction with TPR. The tract at residues L88–K191 is necessary for interaction with HSF1. Residues K98 to L444 are a coiled coil. N6-acetyllysine is present on residues K326, K386, and K419. The residue at position 453 (S453) is a Phosphoserine. Residues E486–V678 adopt a coiled-coil conformation. N6-acetyllysine occurs at positions 502, 531, and 551. Residues L511–N587 form a necessary for association to the NPC region. S596, S597, and S706 each carry phosphoserine. The stretch at S736–T1246 forms a coiled coil. N6-acetyllysine is present on residues K787, K797, K822, and K829. A compositionally biased stretch (polar residues) spans L989–G998. The segment at L989–L1011 is disordered. Residues P1002 to L1011 show a composition bias toward basic and acidic residues. At S1259 the chain carries Phosphoserine. Coiled coils occupy residues E1289–K1494 and V1547–E1700. The necessary for interaction with HSF1 stretch occupies residues Q1292 to M1394. Residues E1689–P1701 show a composition bias toward basic and acidic residues. Positions E1689 to V1744 are disordered. Polar residues predominate over residues E1703–A1722. K1760 carries the N6-acetyllysine modification. T1762 carries the post-translational modification Phosphothreonine. Residues S1873–P1898 show a composition bias toward polar residues. The tract at residues S1873 to H2193 is disordered. The sufficient and essential for mediating its nuclear import stretch occupies residues S1882–T1937. The segment covering T1937–A1951 has biased composition (acidic residues). Polar residues predominate over residues Q1954–S1963. S1963 is modified (phosphoserine). Low complexity predominate over residues Q1994–G2005. Composition is skewed to acidic residues over residues D2016 to N2057 and D2067 to E2088. Residues A2100–E2132 show a composition bias toward polar residues. Residues S2102, S2105, S2116, S2118, and S2141 each carry the phosphoserine modification. Omega-N-methylarginine occurs at positions 2174 and 2179. 2 positions are modified to phosphothreonine: T2184 and T2205. S2223 carries the post-translational modification Phosphoserine. An Omega-N-methylarginine modification is found at R2231. Polar residues predominate over residues E2295 to V2312. Positions E2295–N2431 are disordered. Residues T2313 to T2325 are compositionally biased toward low complexity. Over residues A2327 to S2340 the composition is skewed to acidic residues. Residues E2341–I2351 are compositionally biased toward low complexity. Positions S2353 to D2367 are enriched in acidic residues. Low complexity predominate over residues L2368–P2388. Asymmetric dimethylarginine occurs at positions 2411, 2413, and 2422. Residues G2420–N2431 are compositionally biased toward gly residues.

This sequence belongs to the TPR family. In terms of assembly, homodimer. Part of the nuclear pore complex (NPC). Associates with the XPO1/CRM1-mediated nuclear export complex, the Importin alpha/Importin beta receptor and the dynein 1 complex. Interacts (via C-terminal domain) with the KPNB1; the interaction occurs in a RanGTP-dependent manner. Interacts (via C-terminal region and phosphorylated form) with MAPK1/ERK2 (via phosphorylated form); the interaction requires dimerization of MAPK1/ERK2 and increases following EGF stimulation. Interacts with MAPK3/ERK1; the interaction increases following EGF stimulation. Interacts (via coiled coil region) with NUP153; the interaction is direct. Interacts with HSF1; the interaction increases in a stress-responsive manner and stimulates export of stress-induced HSP70 mRNA. Interacts with huntingtin/HTT; the interaction is inhibited by aggregated huntingtin/HTT forms with expanded polyglutamine stretch. Interacts with MAD1L1 (via N-terminal region), MAD2L1, and TTK; the interactions occurs in a microtubule-independent manner. Interacts (via middle region) with DYNLL1. Interacts with DCTN1, dynein, NUP153 and tubulin. Interacts with MTA1. Interacts with IFI204 (via C-terminal region). Interacts with IFI203. Interacts with ZC3HC1; this interaction mediates ZC3HC1 nuclear envelopes (NE)-association but also required for proper positioning of a substantial amount of TPR at the nuclear basket (NB). Phosphorylated. Phosphorylation occurs on serine and threonine residues (comprised in the C-terminal region) by MAPK1/ERK2 and stabilizes the interaction between these two proteins. As to expression, expressed in the heart, liver, kidney, spleen, lung and skeletal muscles.

It localises to the nucleus. The protein localises to the nucleus membrane. Its subcellular location is the nucleus envelope. The protein resides in the nuclear pore complex. It is found in the cytoplasm. It localises to the cytoskeleton. The protein localises to the spindle. Its subcellular location is the chromosome. The protein resides in the centromere. It is found in the kinetochore. Functionally, component of the nuclear pore complex (NPC), a complex required for the trafficking across the nuclear envelope. Functions as a scaffolding element in the nuclear phase of the NPC essential for normal nucleocytoplasmic transport of proteins and mRNAs, plays a role in the establishment of nuclear-peripheral chromatin compartmentalization in interphase, and in the mitotic spindle checkpoint signaling during mitosis. Involved in the quality control and retention of unspliced mRNAs in the nucleus; in association with NUP153, regulates the nuclear export of unspliced mRNA species bearing constitutive transport element (CTE) in a NXF1- and KHDRBS1-independent manner. Negatively regulates both the association of CTE-containing mRNA with large polyribosomes and translation initiation. Does not play any role in Rev response element (RRE)-mediated export of unspliced mRNAs. Implicated in nuclear export of mRNAs transcribed from heat shock gene promoters; associates both with chromatin in the HSP70 promoter and with mRNAs transcribed from this promoter under stress-induced conditions. Plays a limited role in the regulation of nuclear protein export. Modulates the nucleocytoplasmic transport of activated MAPK1/ERK2 and huntingtin/HTT and may serve as a docking site for the XPO1/CRM1-mediated nuclear export complex. Also plays a role as a structural and functional element of the perinuclear chromatin distribution; involved in the formation and/or maintenance of NPC-associated perinuclear heterochromatin exclusion zones (HEZs). Finally, acts as a spatial regulator of the spindle-assembly checkpoint (SAC) response ensuring a timely and effective recruitment of spindle checkpoint proteins like MAD1L1 and MAD2L1 to unattached kinetochore during the metaphase-anaphase transition before chromosome congression. Its N-terminus is involved in activation of oncogenic kinases. The chain is Nucleoprotein TPR from Mus musculus (Mouse).